Consider the following 162-residue polypeptide: Epoxidase pydX (162 aa).

The first 26 residues, 1 to 26 (MSLIALPLRLLRLLPAITSTWVLAFA), serve as a signal peptide directing secretion. Helical transmembrane passes span 62–82 (WILIVVYPINYALGVVNLFVG) and 89–109 (TGAMSWYTIGLLFSLAHMGYM). Residues N127 and N139 are each glycosylated (N-linked (GlcNAc...) asparagine).

The protein belongs to the epoxidase xenD family.

It localises to the membrane. It functions in the pathway mycotoxin biosynthesis. Epoxidase; part of the gene cluster that mediates the biosynthesis of pyrrocidines, fungal natural products containing a macrocyclic para-cyclophane connected to a decahydrofluorene ring system that show potent antibiotic activities toward Gram-negative bacteria. Within the pathway, pydX functions synergistically with pydB, pydE and pydZ to form the cyclophane. The pathway begins with the PKS-NRPS pydA which, with the help of the trans-enoyl reductase pydC, synthesizes the polyketide-tyrosyl acyl thioester product which can be reductively off-loaded by the terminal reductase (R) domain in pydA. The alpha/beta hydrolase pydG is then required to catalyze the subsequent Knoevenagel condensation that affords the 3-pyrrolin-2-one ring, whereas the four proteins pydB, pydE, pydX and pydZ then function synergistically to form the cyclophane. PydB and the membrane-bound pydX and pydZ are lipid-binding proteins that can sequester and mold the pdyG product into the inverse S-shape. Binding of the medium chain reductase pydE to the complex would trigger the cascade oxidative cyclization. PydY is involved in the Diels-Alder cycloaddition that forms the decahydrofluorene core. Additional non-enzymatic hydroxylation yields pyrrocidine A2 which can be further reduced into pyrrocidine B by an endogenous reductase. In Acremonium sp, this protein is Epoxidase pydX.